A 324-amino-acid polypeptide reads, in one-letter code: Probable 6-phosphogluconolactonase 4, chloroplastic (324 aa).

Residues 1 to 63 constitute a chloroplast transit peptide; that stretch reads MSVSAAVAAA…PAMATDGAAA (63 aa). A disordered region spans residues 19 to 43; the sequence is ARHRSPPASRVAATSRGRPFSSGPH.

It belongs to the glucosamine/galactosamine-6-phosphate isomerase family. 6-phosphogluconolactonase subfamily.

It localises to the plastid. Its subcellular location is the chloroplast. The catalysed reaction is 6-phospho-D-glucono-1,5-lactone + H2O = 6-phospho-D-gluconate + H(+). Its pathway is carbohydrate degradation; pentose phosphate pathway; D-ribulose 5-phosphate from D-glucose 6-phosphate (oxidative stage): step 2/3. Hydrolysis of 6-phosphogluconolactone to 6-phosphogluconate. The polypeptide is Probable 6-phosphogluconolactonase 4, chloroplastic (Oryza sativa subsp. japonica (Rice)).